A 285-amino-acid chain; its full sequence is Diphthine methyl ester synthase (285 aa).

Residues Leu-9, Asp-84, Gly-87, 112-113, and Leu-163 contribute to the S-adenosyl-L-methionine site; that span reads SI. Phosphoserine is present on Ser-171. 2 residues coordinate S-adenosyl-L-methionine: Val-225 and His-250.

The protein belongs to the diphthine synthase family.

It catalyses the reaction 2-[(3S)-amino-3-carboxypropyl]-L-histidyl-[translation elongation factor 2] + 4 S-adenosyl-L-methionine = diphthine methyl ester-[translation elongation factor 2] + 4 S-adenosyl-L-homocysteine + 3 H(+). It participates in protein modification; peptidyl-diphthamide biosynthesis. Functionally, S-adenosyl-L-methionine-dependent methyltransferase that catalyzes four methylations of the modified target histidine residue in translation elongation factor 2 (EF-2), to form an intermediate called diphthine methyl ester. The four successive methylation reactions represent the second step of diphthamide biosynthesis. The chain is Diphthine methyl ester synthase (DPH5) from Bos taurus (Bovine).